The chain runs to 585 residues: Parathyroid hormone/parathyroid hormone-related peptide receptor (585 aa).

The first 26 residues, 1–26 (MGAARIAPGLALLLCCPVLSSAYALV), serve as a signal peptide directing secretion. The Extracellular segment spans residues 27-184 (DADDVMTKEE…REREVFDRLG (158 aa)). 3 cysteine pairs are disulfide-bonded: C48–C113, C104–C144, and C127–C166. The disordered stretch occupies residues 66-100 (DKGWASAPTSGKPRKEKASGKLYPESGEDTGSRHQ). N147, N157, N162, and N172 each carry an N-linked (GlcNAc...) asparagine glycan. Residues 185 to 208 (MIYTVGYSVSLASLTVAVLILAYF) traverse the membrane as a helical segment. Residues 209–215 (RRLHCTR) lie on the Cytoplasmic side of the membrane. Residues 216–235 (NYIHMHLFLSFMLRAVSIFV) form a helical membrane-spanning segment. At 236 to 277 (KDAVLYSGATLDEAERLTEEELRAIAQAPLPPVAATSYVGCR) the chain is on the extracellular side. The chain crosses the membrane as a helical span at residues 278–301 (VAVTFFLYFLATNYYWILVEGLYL). The Cytoplasmic segment spans residues 302–315 (HSLIFMAFFSEKKY). A helical membrane pass occupies residues 316–337 (LWGFTVFGWGLPAIFVAVWVSV). The Extracellular segment spans residues 338-356 (RATLANTGCWDLSSGNKKW). A helical transmembrane segment spans residues 357 to 377 (IIQVPILASIVLNFILFINIV). The Cytoplasmic segment spans residues 378-404 (RVLATKLRETNAGRCDTRQQYRKLLKS). A helical membrane pass occupies residues 405-423 (TLVLMPLFGVHYIVFMATP). Topologically, residues 424-435 (YTEVSGTLWQVQ) are extracellular. The chain crosses the membrane as a helical span at residues 436–458 (MHYEMLFNSFQGFFVAIIYCFCN). Topologically, residues 459–585 (GEVQAEIKKS…LLQEEWETVM (127 aa)) are cytoplasmic. The short motif at 469 to 472 (WSRW) is the Important for interaction with G proteins element. The residue at position 543 (T543) is a Phosphothreonine.

It belongs to the G-protein coupled receptor 2 family. Homodimer in the absence of bound ligand. Peptide hormone binding leads to dissociation of the homodimer. Post-translationally, N-glycosylated.

Its subcellular location is the cell membrane. Functionally, G-protein-coupled receptor for parathyroid hormone (PTH) and for parathyroid hormone-related peptide (PTHLH). Ligand binding causes a conformation change that triggers signaling via guanine nucleotide-binding proteins (G proteins) and modulates the activity of downstream effectors, such as adenylate cyclase (cAMP). PTH1R is coupled to G(s) G alpha proteins and mediates activation of adenylate cyclase activity. PTHLH dissociates from PTH1R more rapidly than PTH; as consequence, the cAMP response induced by PTHLH decays faster than the response induced by PTH. The sequence is that of Parathyroid hormone/parathyroid hormone-related peptide receptor (PTH1R) from Sus scrofa (Pig).